Reading from the N-terminus, the 72-residue chain is Conotoxin VnMKLT2-021 (72 aa).

An N-terminal signal peptide occupies residues 1 to 22 (MKLTCVLIVAVLFLTACQLTTA). The propeptide occupies 23–45 (ASYARSEREHPDLGSSDQNSKLT). A disordered region spans residues 25-44 (YARSEREHPDLGSSDQNSKL). 3 disulfides stabilise this stretch: Cys48–Cys62, Cys55–Cys66, and Cys61–Cys71.

Belongs to the conotoxin O1 superfamily. Expressed by the venom duct.

The protein resides in the secreted. This Conus ventricosus (Mediterranean cone) protein is Conotoxin VnMKLT2-021.